A 206-amino-acid chain; its full sequence is MARYIGPKCRLARREGVDLELKSGVRPSESKCNMNAAPGQHGGRRGRLSDYGGQLREKQKLKRTYGVLERQFRNYYKKAVQQKGSTGENLLILLEQRLDNVVYRMGYGSTRAEARQLVSHGAIEVNGQRVTIASYQVQAEDIVSVREQSRKQIRIQSALEIAKQRGFVDWIEVDAAKMSGQFKRVPERIDLSADINESLVVELYSK.

Residues proline 27 to arginine 47 form a disordered region. The S4 RNA-binding domain maps to glutamine 96–alanine 158.

This sequence belongs to the universal ribosomal protein uS4 family. In terms of assembly, part of the 30S ribosomal subunit. Contacts protein S5. The interaction surface between S4 and S5 is involved in control of translational fidelity.

One of the primary rRNA binding proteins, it binds directly to 16S rRNA where it nucleates assembly of the body of the 30S subunit. In terms of biological role, with S5 and S12 plays an important role in translational accuracy. The chain is Small ribosomal subunit protein uS4 from Dichelobacter nodosus (strain VCS1703A).